The following is a 531-amino-acid chain: Peptide chain release factor 3 (531 aa).

The region spanning 10 to 278 (RRRRTFAIIS…SLIDWAPAPK (269 aa)) is the tr-type G domain. GTP contacts are provided by residues 19 to 26 (SHPDAGKT), 87 to 91 (DTPGH), and 141 to 144 (NKYD).

This sequence belongs to the TRAFAC class translation factor GTPase superfamily. Classic translation factor GTPase family. PrfC subfamily.

It is found in the cytoplasm. Its function is as follows. Increases the formation of ribosomal termination complexes and stimulates activities of RF-1 and RF-2. It binds guanine nucleotides and has strong preference for UGA stop codons. It may interact directly with the ribosome. The stimulation of RF-1 and RF-2 is significantly reduced by GTP and GDP, but not by GMP. In Neisseria gonorrhoeae (strain NCCP11945), this protein is Peptide chain release factor 3.